A 456-amino-acid polypeptide reads, in one-letter code: Ammonium transporter Amt2 (456 aa).

11 helical membrane-spanning segments follow: residues 18–38 (LVWV…FAML), 61–81 (IGVI…AGLT), 109–129 (WLFG…AVAG), 141–161 (ILIA…GGFL), 170–190 (AGGM…AWII), 211–231 (ITFA…FNVG), 255–275 (VALV…GVAF), 281–301 (VDTL…TAIA), 304–324 (IVWP…PIVF), 339–359 (VFPV…VFAV), and 377–397 (VGVG…FGGF).

This sequence belongs to the ammonia transporter channel (TC 1.A.11.2) family. In terms of assembly, homotrimer. Interacts with both GlnK1 and GlnK2 after ammonium shock.

Its subcellular location is the cell membrane. Functionally, involved in the uptake of ammonium/ammonia (NH(4)(+)/NH(3)). Transport is electrogenic. This Haloferax mediterranei (strain ATCC 33500 / DSM 1411 / JCM 8866 / NBRC 14739 / NCIMB 2177 / R-4) (Halobacterium mediterranei) protein is Ammonium transporter Amt2.